Consider the following 465-residue polypeptide: Cerebellar degeneration-related protein 2-like (465 aa).

Coiled-coil stretches lie at residues 31 to 64 (AAEL…HEIE), 91 to 142 (ARDL…LEQL), and 188 to 266 (LEQE…YLLA). The tract at residues 282–315 (APEADDPQPGSGDDSNAQDGVSSPAASPSHAVRK) is disordered. Phosphoserine occurs at positions 308, 318, and 344. Residues 350–377 (MSILREVDEQYHALLEKYEELLSKCRQH) are a coiled coil. A disordered region spans residues 382–421 (RHAGVQTSRPISRDSSWRDLLGGEESPGEGKAGEKSLSQH). A Phosphoserine modification is found at serine 407.

The protein belongs to the CDR2 family.

In Mus musculus (Mouse), this protein is Cerebellar degeneration-related protein 2-like (Cdr2l).